Reading from the N-terminus, the 163-residue chain is UPF0763 protein JJD26997_0796 (163 aa).

It belongs to the UPF0763 family.

This chain is UPF0763 protein JJD26997_0796, found in Campylobacter jejuni subsp. doylei (strain ATCC BAA-1458 / RM4099 / 269.97).